The following is a 210-amino-acid chain: N-(5'-phosphoribosyl)anthranilate isomerase (210 aa).

The protein belongs to the TrpF family.

It carries out the reaction N-(5-phospho-beta-D-ribosyl)anthranilate = 1-(2-carboxyphenylamino)-1-deoxy-D-ribulose 5-phosphate. It participates in amino-acid biosynthesis; L-tryptophan biosynthesis; L-tryptophan from chorismate: step 3/5. In Staphylococcus aureus (strain Mu3 / ATCC 700698), this protein is N-(5'-phosphoribosyl)anthranilate isomerase.